Reading from the N-terminus, the 163-residue chain is Lectin-like protein EP153R (163 aa).

Residues 1–26 (MFSNKKYIGLINKKEGLKKKIDDYSI) are Cytoplasmic-facing. The chain crosses the membrane as a helical span at residues 27–47 (LIIGILIGTNILSLIINIIGE). Over 48-163 (INKPICYQNN…YTDLLFICSK (116 aa)) the chain is Extracellular. Cys-63 and Cys-74 are disulfide-bonded. Residues 63-162 (CPKDWVGYNN…HYTDLLFICS (100 aa)) are lectin-like. Asn-84, Asn-96, Asn-97, Asn-103, Asn-109, Asn-115, Asn-129, and Asn-135 each carry an N-linked (GlcNAc...) asparagine; by host glycan. Residues Cys-92 and Cys-161 are joined by a disulfide bond.

It belongs to the asfivirus lectin-like protein family. As to quaternary structure, homodimer.

The protein localises to the host endoplasmic reticulum membrane. Functionally, down-regulates MHC-I expression by impairing the appropriate configuration or presentation into the plasma membrane of the latter. Participates in viral hemadsorption, which may help viral spread. Reduces the transactivating activity of host TP53, thus inhibiting apoptosis. Non-essential for virus growth in swine macrophage cell cultures. The sequence is that of Lectin-like protein EP153R from African swine fever virus (isolate Warthog/Namibia/Wart80/1980) (ASFV).